A 507-amino-acid polypeptide reads, in one-letter code: Maturase K (507 aa).

Belongs to the intron maturase 2 family. MatK subfamily.

It is found in the plastid. Its subcellular location is the chloroplast. Usually encoded in the trnK tRNA gene intron. Probably assists in splicing its own and other chloroplast group II introns. In Persea americana (Avocado), this protein is Maturase K.